A 664-amino-acid chain; its full sequence is DNA ligase (664 aa).

NAD(+)-binding positions include 30–34, 79–80, and glutamate 109; these read DFEFD and SL. The active-site N6-AMP-lysine intermediate is lysine 111. NAD(+) contacts are provided by arginine 132, glutamate 169, lysine 284, and lysine 308. The Zn(2+) site is built by cysteine 403, cysteine 406, cysteine 421, and cysteine 427. The 79-residue stretch at 586–664 folds into the BRCT domain; it reads NRSEKLKGLT…NEDAFLNMLE (79 aa).

This sequence belongs to the NAD-dependent DNA ligase family. LigA subfamily. Requires Mg(2+) as cofactor. The cofactor is Mn(2+).

The enzyme catalyses NAD(+) + (deoxyribonucleotide)n-3'-hydroxyl + 5'-phospho-(deoxyribonucleotide)m = (deoxyribonucleotide)n+m + AMP + beta-nicotinamide D-nucleotide.. Functionally, DNA ligase that catalyzes the formation of phosphodiester linkages between 5'-phosphoryl and 3'-hydroxyl groups in double-stranded DNA using NAD as a coenzyme and as the energy source for the reaction. It is essential for DNA replication and repair of damaged DNA. This is DNA ligase from Parabacteroides distasonis (strain ATCC 8503 / DSM 20701 / CIP 104284 / JCM 5825 / NCTC 11152).